The following is a 181-amino-acid chain: Oligoribonuclease (181 aa).

Positions 8–171 (LIWLDLEMTG…DDIKDSIMEL (164 aa)) constitute an Exonuclease domain. Tyr-129 is an active-site residue.

Belongs to the oligoribonuclease family.

The protein localises to the cytoplasm. 3'-to-5' exoribonuclease specific for small oligoribonucleotides. This is Oligoribonuclease from Pseudoalteromonas translucida (strain TAC 125).